A 211-amino-acid chain; its full sequence is Cytidylate kinase (211 aa).

ATP is bound at residue 9-17; sequence GPAAAGKGT.

Belongs to the cytidylate kinase family. Type 1 subfamily.

Its subcellular location is the cytoplasm. The enzyme catalyses CMP + ATP = CDP + ADP. It catalyses the reaction dCMP + ATP = dCDP + ADP. This Paramagnetospirillum magneticum (strain ATCC 700264 / AMB-1) (Magnetospirillum magneticum) protein is Cytidylate kinase.